The sequence spans 358 residues: Aminomethyltransferase (358 aa).

Belongs to the GcvT family. As to quaternary structure, the glycine cleavage system is composed of four proteins: P, T, L and H.

The enzyme catalyses N(6)-[(R)-S(8)-aminomethyldihydrolipoyl]-L-lysyl-[protein] + (6S)-5,6,7,8-tetrahydrofolate = N(6)-[(R)-dihydrolipoyl]-L-lysyl-[protein] + (6R)-5,10-methylene-5,6,7,8-tetrahydrofolate + NH4(+). The glycine cleavage system catalyzes the degradation of glycine. The chain is Aminomethyltransferase from Francisella tularensis subsp. mediasiatica (strain FSC147).